The primary structure comprises 148 residues: Large ribosomal subunit protein uL15 (148 aa).

The interval 1–47 (MTKLEDLRPTPGSVKPRKRVGRGIGSGHGKTSGRGHKGQKSRGSGKV) is disordered. Over residues 31–45 (TSGRGHKGQKSRGSG) the composition is skewed to basic residues.

It belongs to the universal ribosomal protein uL15 family. As to quaternary structure, part of the 50S ribosomal subunit.

In terms of biological role, binds to the 23S rRNA. The protein is Large ribosomal subunit protein uL15 of Pseudothermotoga lettingae (strain ATCC BAA-301 / DSM 14385 / NBRC 107922 / TMO) (Thermotoga lettingae).